Here is a 505-residue protein sequence, read N- to C-terminus: RNA-splicing ligase RtcB homolog (505 aa).

Positions 119, 122, 227, 259, and 353 each coordinate Mn(2+). Residue 226 to 230 (NHYAE) coordinates GMP. GMP-binding positions include 353–354 (HN), 402–405 (GGTM), Ser409, 428–431 (HGAG), and Lys504. His428 serves as the catalytic GMP-histidine intermediate.

It belongs to the RtcB family. In terms of assembly, catalytic component of the tRNA-splicing ligase complex. Requires Mn(2+) as cofactor.

The enzyme catalyses a 3'-end 3'-phospho-ribonucleotide-RNA + a 5'-end dephospho-ribonucleoside-RNA + GTP = a ribonucleotidyl-ribonucleotide-RNA + GMP + diphosphate. It carries out the reaction a 3'-end 2',3'-cyclophospho-ribonucleotide-RNA + a 5'-end dephospho-ribonucleoside-RNA + GTP + H2O = a ribonucleotidyl-ribonucleotide-RNA + GMP + diphosphate + H(+). Functionally, catalytic subunit of the tRNA-splicing ligase complex that acts by directly joining spliced tRNA halves to mature-sized tRNAs by incorporating the precursor-derived splice junction phosphate into the mature tRNA as a canonical 3',5'-phosphodiester. May act as an RNA ligase with broad substrate specificity, and may function toward other RNAs. In Nematostella vectensis (Starlet sea anemone), this protein is RNA-splicing ligase RtcB homolog.